The chain runs to 181 residues: Shikimate kinase (181 aa).

Residue Gly-11–Lys-16 participates in ATP binding. Ser-15 contributes to the Mg(2+) binding site. Positions 33, 58, and 80 each coordinate substrate. Residue Arg-128 participates in ATP binding. Arg-144 provides a ligand contact to substrate.

It belongs to the shikimate kinase family. Monomer. Mg(2+) serves as cofactor.

It is found in the cytoplasm. The enzyme catalyses shikimate + ATP = 3-phosphoshikimate + ADP + H(+). It functions in the pathway metabolic intermediate biosynthesis; chorismate biosynthesis; chorismate from D-erythrose 4-phosphate and phosphoenolpyruvate: step 5/7. In terms of biological role, catalyzes the specific phosphorylation of the 3-hydroxyl group of shikimic acid using ATP as a cosubstrate. This chain is Shikimate kinase, found in Leptospira biflexa serovar Patoc (strain Patoc 1 / Ames).